Reading from the N-terminus, the 435-residue chain is Light-independent protochlorophyllide reductase subunit N (435 aa).

The [4Fe-4S] cluster site is built by C23, C48, and C108.

This sequence belongs to the BchN/ChlN family. Protochlorophyllide reductase is composed of three subunits; ChlL, ChlN and ChlB. Forms a heterotetramer of two ChlB and two ChlN subunits. [4Fe-4S] cluster is required as a cofactor.

Its subcellular location is the plastid. The protein resides in the chloroplast. The enzyme catalyses chlorophyllide a + oxidized 2[4Fe-4S]-[ferredoxin] + 2 ADP + 2 phosphate = protochlorophyllide a + reduced 2[4Fe-4S]-[ferredoxin] + 2 ATP + 2 H2O. The protein operates within porphyrin-containing compound metabolism; chlorophyll biosynthesis (light-independent). Its function is as follows. Component of the dark-operative protochlorophyllide reductase (DPOR) that uses Mg-ATP and reduced ferredoxin to reduce ring D of protochlorophyllide (Pchlide) to form chlorophyllide a (Chlide). This reaction is light-independent. The NB-protein (ChlN-ChlB) is the catalytic component of the complex. This chain is Light-independent protochlorophyllide reductase subunit N, found in Auxenochlorella protothecoides (Green microalga).